The following is a 35-amino-acid chain: Photosystem II reaction center protein M (35 aa).

Residues 5–25 (ILAFIATALFIIIPTAFLLIL) traverse the membrane as a helical segment.

The protein belongs to the PsbM family. In terms of assembly, PSII is composed of 1 copy each of membrane proteins PsbA, PsbB, PsbC, PsbD, PsbE, PsbF, PsbH, PsbI, PsbJ, PsbK, PsbL, PsbM, PsbT, PsbX, PsbY, PsbZ, Psb30/Ycf12, at least 3 peripheral proteins of the oxygen-evolving complex and a large number of cofactors. It forms dimeric complexes.

The protein resides in the plastid. It is found in the chloroplast thylakoid membrane. Functionally, one of the components of the core complex of photosystem II (PSII). PSII is a light-driven water:plastoquinone oxidoreductase that uses light energy to abstract electrons from H(2)O, generating O(2) and a proton gradient subsequently used for ATP formation. It consists of a core antenna complex that captures photons, and an electron transfer chain that converts photonic excitation into a charge separation. This subunit is found at the monomer-monomer interface. In Chara vulgaris (Common stonewort), this protein is Photosystem II reaction center protein M.